A 168-amino-acid chain; its full sequence is Alpha-amylase/trypsin inhibitor CM3 (168 aa).

The signal sequence occupies residues Met-1–Ala-25.

This sequence belongs to the protease inhibitor I6 (cereal trypsin/alpha-amylase inhibitor) family. Subunit of the tetrameric inhibitor. In terms of processing, five disulfide bonds, which are essential for the inhibitor activity, are probably present. As to expression, developing endosperm.

It is found in the secreted. Its function is as follows. Alpha-amylase/trypsin inhibitor. It could be involved in insect defense mechanisms. This is Alpha-amylase/trypsin inhibitor CM3 from Triticum aestivum (Wheat).